The primary structure comprises 356 residues: Fructose-1,6-bisphosphatase class 1 (356 aa).

4 residues coordinate Mg(2+): glutamate 91, aspartate 113, leucine 115, and aspartate 116. Substrate-binding positions include 116–119 and asparagine 208; that span reads DGSS. Glutamate 280 provides a ligand contact to Mg(2+).

Belongs to the FBPase class 1 family. Homotetramer. The cofactor is Mg(2+).

It is found in the cytoplasm. It catalyses the reaction beta-D-fructose 1,6-bisphosphate + H2O = beta-D-fructose 6-phosphate + phosphate. The protein operates within carbohydrate biosynthesis; gluconeogenesis. The sequence is that of Fructose-1,6-bisphosphatase class 1 from Methylacidiphilum infernorum (isolate V4) (Methylokorus infernorum (strain V4)).